The primary structure comprises 471 residues: Adenosylhomocysteinase (471 aa).

Positions 60, 135, and 196 each coordinate substrate. 197 to 199 serves as a coordination point for NAD(+); sequence TTT. Residues Lys-226 and Asp-230 each coordinate substrate. Residues Asn-231, 260 to 265, Glu-283, Asn-318, 339 to 341, and Asn-387 contribute to the NAD(+) site; these read GYGDVG and IGH.

This sequence belongs to the adenosylhomocysteinase family. It depends on NAD(+) as a cofactor.

The protein localises to the cytoplasm. The enzyme catalyses S-adenosyl-L-homocysteine + H2O = L-homocysteine + adenosine. It functions in the pathway amino-acid biosynthesis; L-homocysteine biosynthesis; L-homocysteine from S-adenosyl-L-homocysteine: step 1/1. Functionally, may play a key role in the regulation of the intracellular concentration of adenosylhomocysteine. This chain is Adenosylhomocysteinase, found in Chlorobium phaeobacteroides (strain DSM 266 / SMG 266 / 2430).